A 470-amino-acid chain; its full sequence is Argininosuccinate lyase (470 aa).

This sequence belongs to the lyase 1 family. Argininosuccinate lyase subfamily.

The protein localises to the cytoplasm. It carries out the reaction 2-(N(omega)-L-arginino)succinate = fumarate + L-arginine. It functions in the pathway amino-acid biosynthesis; L-arginine biosynthesis; L-arginine from L-ornithine and carbamoyl phosphate: step 3/3. This chain is Argininosuccinate lyase, found in Bordetella avium (strain 197N).